Reading from the N-terminus, the 282-residue chain is Probable metal transport system membrane protein TM_0125 (282 aa).

A run of 9 helical transmembrane segments spans residues 33–53, 58–78, 79–99, 109–129, 148–168, 184–204, 210–230, 234–254, and 259–279; these read AFVG…IVVF, FIGD…TLIG, ADHR…VSLF, AIGI…SVSG, STDV…TVVF, FYGI…AITV, VVGV…SKIF, FWSL…AGFL, and LDLP…LPML.

This sequence belongs to the ABC-3 integral membrane protein family.

The protein resides in the cell inner membrane. Part of an ATP-driven transport system TM_0123/TM_0124/TM_0125 for a metal. This is Probable metal transport system membrane protein TM_0125 from Thermotoga maritima (strain ATCC 43589 / DSM 3109 / JCM 10099 / NBRC 100826 / MSB8).